We begin with the raw amino-acid sequence, 384 residues long: Trophoblast glycoprotein-like (384 aa).

The N-terminal stretch at 1 to 30 is a signal peptide; that stretch reads MAPRAGQRGLWSPLPGLLLLAAALSRPAAP. 2 cysteine pairs are disulfide-bonded: Cys-31–Cys-37 and Cys-35–Cys-47. The Extracellular portion of the chain corresponds to 31-309; the sequence is CPFQCYCFGS…DVAGPELEAS (279 aa). LRR repeat units lie at residues 61 to 84, 95 to 118, 119 to 142, 173 to 196, and 198 to 219; these read PPDA…AFAG, LPLL…AFDG, LPSL…AFRG, LAEL…ALRL, and RLEQ…ELSA. A glycan (N-linked (GlcNAc...) asparagine) is linked at Asn-66. Intrachain disulfides connect Cys-240–Cys-266 and Cys-242–Cys-287. Residues 310 to 330 traverse the membrane as a helical segment; the sequence is YVFFGLVLALIGLIFLMVLYL. Residues 331 to 384 lie on the Cytoplasmic side of the membrane; the sequence is NRRGIQRWMHNLREACRDQMEGYHYRYEQDADPRRAPAPAAPAGSRATSPGSGL. Positions 361-384 are disordered; sequence ADPRRAPAPAAPAGSRATSPGSGL. The span at 367–384 shows a compositional bias: low complexity; it reads PAPAAPAGSRATSPGSGL.

It localises to the membrane. The sequence is that of Trophoblast glycoprotein-like (Tpbgl) from Mus musculus (Mouse).